We begin with the raw amino-acid sequence, 283 residues long: Bifunctional protein FolD (283 aa).

166 to 168 is a binding site for NADP(+); the sequence is GAS.

The protein belongs to the tetrahydrofolate dehydrogenase/cyclohydrolase family. In terms of assembly, homodimer.

It carries out the reaction (6R)-5,10-methylene-5,6,7,8-tetrahydrofolate + NADP(+) = (6R)-5,10-methenyltetrahydrofolate + NADPH. The enzyme catalyses (6R)-5,10-methenyltetrahydrofolate + H2O = (6R)-10-formyltetrahydrofolate + H(+). It participates in one-carbon metabolism; tetrahydrofolate interconversion. Its function is as follows. Catalyzes the oxidation of 5,10-methylenetetrahydrofolate to 5,10-methenyltetrahydrofolate and then the hydrolysis of 5,10-methenyltetrahydrofolate to 10-formyltetrahydrofolate. In Coxiella burnetii (strain Dugway 5J108-111), this protein is Bifunctional protein FolD.